Consider the following 96-residue polypeptide: Putative translation initiation factor IF-1, chloroplastic (96 aa).

The S1-like domain maps to 18 to 57 (INYVSGKIRHSFIRILPGDRVKIEVSPYDSTKGRIIYRLH).

The protein belongs to the IF-1 family. Component of the 30S ribosomal translation pre-initiation complex which assembles on the 30S ribosome in the order IF-2 and IF-3, IF-1 and N-formylmethionyl-tRNA(fMet); mRNA recruitment can occur at any time during PIC assembly.

The protein resides in the plastid. It is found in the chloroplast. Its function is as follows. One of the essential components for the initiation of protein synthesis. Stabilizes the binding of IF-2 and IF-3 on the 30S subunit to which N-formylmethionyl-tRNA(fMet) subsequently binds. Helps modulate mRNA selection, yielding the 30S pre-initiation complex (PIC). Upon addition of the 50S ribosomal subunit IF-1, IF-2 and IF-3 are released leaving the mature 70S translation initiation complex. In Nicotiana tabacum (Common tobacco), this protein is Putative translation initiation factor IF-1, chloroplastic (infA).